Here is a 177-residue protein sequence, read N- to C-terminus: MHNNYKIAKVYAEGLFEIANTKNSLAEINEQLNSIKSVLKQMPEFYYFLVNPLISQQIKKNTIKIVFNNNLDKITLNFLLILIERRRIIYFYDIVDQFILIWNKATNTSVVEIASVISLTEKQQQYLINKLKEITKANYIKLKLKIDPSLIGGLIIKFGSNLIDLSLKGKLKNSPYI.

The protein belongs to the ATPase delta chain family. F-type ATPases have 2 components, F(1) - the catalytic core - and F(0) - the membrane proton channel. F(1) has five subunits: alpha(3), beta(3), gamma(1), delta(1), epsilon(1). CF(0) has four main subunits: a(1), b(1), b'(1) and c(10-14). The alpha and beta chains form an alternating ring which encloses part of the gamma chain. F(1) is attached to F(0) by a central stalk formed by the gamma and epsilon chains, while a peripheral stalk is formed by the delta, b and b' chains.

The protein resides in the plastid. Its subcellular location is the chloroplast thylakoid membrane. F(1)F(0) ATP synthase produces ATP from ADP in the presence of a proton or sodium gradient. F-type ATPases consist of two structural domains, F(1) containing the extramembraneous catalytic core and F(0) containing the membrane proton channel, linked together by a central stalk and a peripheral stalk. During catalysis, ATP synthesis in the catalytic domain of F(1) is coupled via a rotary mechanism of the central stalk subunits to proton translocation. Functionally, this protein is part of the stalk that links CF(0) to CF(1). It either transmits conformational changes from CF(0) to CF(1) or is implicated in proton conduction. The polypeptide is ATP synthase subunit delta, chloroplastic (Galdieria sulphuraria (Red alga)).